The sequence spans 908 residues: Oxysterol-binding protein 2 (908 aa).

Residues serine 42–threonine 112 form a disordered region. Positions glutamate 81–proline 90 are enriched in polar residues. Residues leucine 179–alanine 271 enclose the PH domain. 3 disordered regions span residues threonine 279–glutamate 299, arginine 413–aspartate 445, and leucine 822–arginine 843. Serine 284 carries the post-translational modification Phosphoserine. The segment covering serine 424–serine 437 has biased composition (low complexity).

The protein belongs to the OSBP family. In terms of assembly, interacts with CCDC159. As to expression, expressed in the testis (at protein level). Expressed in postmeiotic germ cells of the testis.

Its subcellular location is the membrane. The protein resides in the cytoplasmic vesicle. The protein localises to the secretory vesicle. It is found in the acrosome. Functionally, binds 7-ketocholesterol. Acts during spermatid development where its function is required prior to the removal of cytoplasm from the sperm head. The sequence is that of Oxysterol-binding protein 2 (Osbp2) from Mus musculus (Mouse).